Consider the following 122-residue polypeptide: Large ribosomal subunit protein uL14 (122 aa).

Belongs to the universal ribosomal protein uL14 family. In terms of assembly, part of the 50S ribosomal subunit. Forms a cluster with proteins L3 and L19. In the 70S ribosome, L14 and L19 interact and together make contacts with the 16S rRNA in bridges B5 and B8.

Its function is as follows. Binds to 23S rRNA. Forms part of two intersubunit bridges in the 70S ribosome. This Stenotrophomonas maltophilia (strain R551-3) protein is Large ribosomal subunit protein uL14.